The following is a 129-amino-acid chain: Small ribosomal subunit protein uS11 (129 aa).

It belongs to the universal ribosomal protein uS11 family. Part of the 30S ribosomal subunit. Interacts with proteins S7 and S18. Binds to IF-3.

Functionally, located on the platform of the 30S subunit, it bridges several disparate RNA helices of the 16S rRNA. Forms part of the Shine-Dalgarno cleft in the 70S ribosome. The sequence is that of Small ribosomal subunit protein uS11 from Lactobacillus delbrueckii subsp. bulgaricus (strain ATCC 11842 / DSM 20081 / BCRC 10696 / JCM 1002 / NBRC 13953 / NCIMB 11778 / NCTC 12712 / WDCM 00102 / Lb 14).